A 1100-amino-acid polypeptide reads, in one-letter code: Isoleucine--tRNA ligase (1100 aa).

The 'HIGH' region motif lies at 48–58; the sequence is PFATGLPHFGH. The 'KMSKS' region signature appears at 626–630; it reads KMSKS. Lysine 629 contributes to the ATP binding site.

Belongs to the class-I aminoacyl-tRNA synthetase family. IleS type 2 subfamily. As to quaternary structure, monomer. Zn(2+) is required as a cofactor.

The protein localises to the cytoplasm. It catalyses the reaction tRNA(Ile) + L-isoleucine + ATP = L-isoleucyl-tRNA(Ile) + AMP + diphosphate. Catalyzes the attachment of isoleucine to tRNA(Ile). As IleRS can inadvertently accommodate and process structurally similar amino acids such as valine, to avoid such errors it has two additional distinct tRNA(Ile)-dependent editing activities. One activity is designated as 'pretransfer' editing and involves the hydrolysis of activated Val-AMP. The other activity is designated 'posttransfer' editing and involves deacylation of mischarged Val-tRNA(Ile). This chain is Isoleucine--tRNA ligase, found in Treponema denticola (strain ATCC 35405 / DSM 14222 / CIP 103919 / JCM 8153 / KCTC 15104).